Reading from the N-terminus, the 66-residue chain is Large ribosomal subunit protein bL35 (66 aa).

Belongs to the bacterial ribosomal protein bL35 family.

The chain is Large ribosomal subunit protein bL35 from Beijerinckia indica subsp. indica (strain ATCC 9039 / DSM 1715 / NCIMB 8712).